The sequence spans 120 residues: Secreted RxLR effector protein 29 (120 aa).

The first 21 residues, 1 to 21 (MRRTAFIVLSLVALIAPCVTS), serve as a signal peptide directing secretion. A RxLR-dEER motif is present at residues 47–64 (RHLRSEANGRLAVVDEEK).

The protein belongs to the RxLR effector family.

It is found in the secreted. The protein resides in the host cytoplasm. Its subcellular location is the host nucleus. In terms of biological role, effector that acts as a broad suppressor of cell death to interrupt plant immunity. Inhibits cell death induced by cell death-inducing proteins, including the PAMP elicitor INF1 from P.infestans. The polypeptide is Secreted RxLR effector protein 29 (Plasmopara viticola (Downy mildew of grapevine)).